The sequence spans 156 residues: Small ribosomal subunit protein uS7 (156 aa).

Belongs to the universal ribosomal protein uS7 family. In terms of assembly, part of the 30S ribosomal subunit. Contacts proteins S9 and S11.

Functionally, one of the primary rRNA binding proteins, it binds directly to 16S rRNA where it nucleates assembly of the head domain of the 30S subunit. Is located at the subunit interface close to the decoding center, probably blocks exit of the E-site tRNA. In Rhodospirillum rubrum (strain ATCC 11170 / ATH 1.1.1 / DSM 467 / LMG 4362 / NCIMB 8255 / S1), this protein is Small ribosomal subunit protein uS7.